A 116-amino-acid polypeptide reads, in one-letter code: Large ribosomal subunit protein bL20 (116 aa).

Belongs to the bacterial ribosomal protein bL20 family.

Binds directly to 23S ribosomal RNA and is necessary for the in vitro assembly process of the 50S ribosomal subunit. It is not involved in the protein synthesizing functions of that subunit. The sequence is that of Large ribosomal subunit protein bL20 from Helicobacter pylori (strain Shi470).